We begin with the raw amino-acid sequence, 945 residues long: Leucine--tRNA ligase (945 aa).

The 'HIGH' region signature appears at 43 to 53 (PYPNGAIHIGH). The 'KMSKS' region signature appears at 638–642 (KMSKS). An ATP-binding site is contributed by Lys641.

Belongs to the class-I aminoacyl-tRNA synthetase family.

It localises to the cytoplasm. It carries out the reaction tRNA(Leu) + L-leucine + ATP = L-leucyl-tRNA(Leu) + AMP + diphosphate. This is Leucine--tRNA ligase from Pyrobaculum arsenaticum (strain DSM 13514 / JCM 11321 / PZ6).